The chain runs to 296 residues: Cbb3-type cytochrome c oxidase subunit CcoP (296 aa).

The Cytoplasmic portion of the chain corresponds to 1-31 (MAQNYKDELSGVETTGHEWDGLRELNNPLPK). Residues 32–52 (WWLYLFYVCIAWAMVYYVFYP) traverse the membrane as a helical segment. The Periplasmic segment spans residues 53-296 (AWPLGKTYTK…VYVHNLGGGK (244 aa)). Cytochrome c domains lie at 108 to 200 (FAMA…LSLN) and 207 to 293 (GKVA…HNLG). Positions 121, 124, 125, 175, 220, 223, 224, and 270 each coordinate heme c.

Belongs to the CcoP / FixP family. As to quaternary structure, component of the cbb3-type cytochrome c oxidase at least composed of CcoN, CcoO, CcoQ and CcoP. It depends on heme c as a cofactor.

It is found in the cell inner membrane. The protein operates within energy metabolism; oxidative phosphorylation. In terms of biological role, C-type cytochrome. Part of the cbb3-type cytochrome c oxidase complex. CcoP subunit is required for transferring electrons from donor cytochrome c via its heme groups to CcoO subunit. From there, electrons are shuttled to the catalytic binuclear center of CcoN subunit where oxygen reduction takes place. The complex also functions as a proton pump. The protein is Cbb3-type cytochrome c oxidase subunit CcoP of Azospirillum sp. (strain B510).